A 128-amino-acid chain; its full sequence is Early 4 ORF1 protein (128 aa).

The Cytoplasmic portion of the chain corresponds to 1 to 26 (MAAAVEALYVVLEREGAILPRQEGFS). The chain crosses the membrane as a helical span at residues 27–47 (GVYVFFSPINFVIPPMGAVML). The Extracellular segment spans residues 48–99 (SLRLRVCIPPGYFGRFLALTDVNQPDVFTESYIMTPDMTEELSVVLFNHGDQ). The chain crosses the membrane as a helical span at residues 100-120 (FFYGHAGMAVVRLMLIRVVFP). At 121–128 (VVRQASNV) the chain is on the cytoplasmic side. A PBZ domain binding motif motif is present at residues 125–128 (ASNV).

The protein belongs to the adenoviridae E4-ORF1 family. In terms of assembly, may interact with host PDZ proteins through the PDZ domain binding motif (PBM), namely host DLG1, PATJ and TJP2.

The protein resides in the host membrane. May modulate tight-junctions functions of infected cells through interactions with PDZ proteins. E4 ORF1 has ben show for Adenovirus 9 to interact with protein involved in tight junction regulation. May play a role in mTOR activation by activating PI3-kinase, thus overriding cellular checkpoint for translation. The protein is Early 4 ORF1 protein of Human adenovirus C serotype 2 (HAdV-2).